The following is a 156-amino-acid chain: MPRKRVIARREVLPDPKYGSVQLAKFITILMLSGKKSLAERIIYGALGRVSEKANQDPMDVLEKALENVRPLVEVKSRRVGGATYQVPVEVRPERRSTLAMRWLVEAARKRSEKSMDLRLAGELLDAHEGKGTAVKKREDTHRMAEANKAFAHYRW.

Belongs to the universal ribosomal protein uS7 family. Part of the 30S ribosomal subunit. Contacts proteins S9 and S11.

Its function is as follows. One of the primary rRNA binding proteins, it binds directly to 16S rRNA where it nucleates assembly of the head domain of the 30S subunit. Is located at the subunit interface close to the decoding center, probably blocks exit of the E-site tRNA. This Nitrosococcus oceani (strain ATCC 19707 / BCRC 17464 / JCM 30415 / NCIMB 11848 / C-107) protein is Small ribosomal subunit protein uS7.